A 141-amino-acid chain; its full sequence is MEIRVFRQEDFEEVITLWERCDLLRPWNDPEMDIERKMNHDVSLFLVAEVNGEVVGTVMGGYDGHRGSAYYLGVHPEFRGRGIANALLNRLEKKLIARGCPKIQINVPEDNDMVLGMYERLGYEHADVLSLGKRLIEDEEY.

In terms of domain architecture, N-acetyltransferase spans 1–141; the sequence is MEIRVFRQED…GKRLIEDEEY (141 aa).

Belongs to the acetyltransferase family. YpeA subfamily.

This is Acetyltransferase YpeA from Escherichia coli O157:H7.